Reading from the N-terminus, the 255-residue chain is Indole-3-glycerol phosphate synthase (255 aa).

It belongs to the TrpC family.

The enzyme catalyses 1-(2-carboxyphenylamino)-1-deoxy-D-ribulose 5-phosphate + H(+) = (1S,2R)-1-C-(indol-3-yl)glycerol 3-phosphate + CO2 + H2O. The protein operates within amino-acid biosynthesis; L-tryptophan biosynthesis; L-tryptophan from chorismate: step 4/5. The protein is Indole-3-glycerol phosphate synthase of Streptococcus thermophilus (strain CNRZ 1066).